A 28-amino-acid polypeptide reads, in one-letter code: fur leader peptide (28 aa).

Its function is as follows. Cotranscribed with fur, it is essential for fur translation. The fur ribosomal binding site (RBS) is occluded by the 5'-mRNA secondary structure, which is opened by uof translation. The chain is fur leader peptide (uof) from Escherichia coli (strain K12).